Consider the following 388-residue polypeptide: Oligogalacturonate lyase (388 aa).

Its subcellular location is the periplasm. It carries out the reaction 4-(4-deoxy-alpha-D-galact-4-enuronosyl)-D-galacturonate = 2 5-dehydro-4-deoxy-D-glucuronate. Its pathway is glycan metabolism; pectin degradation; 2-dehydro-3-deoxy-D-gluconate from pectin: step 3/5. In terms of biological role, involved in degradation of pectin, which causes soft-rod disease in plants. The polypeptide is Oligogalacturonate lyase (ogl) (Dickeya dadantii (strain 3937) (Erwinia chrysanthemi (strain 3937))).